A 98-amino-acid polypeptide reads, in one-letter code: Aspartyl/glutamyl-tRNA(Asn/Gln) amidotransferase subunit C (98 aa).

The protein belongs to the GatC family. As to quaternary structure, heterotrimer of A, B and C subunits.

It catalyses the reaction L-glutamyl-tRNA(Gln) + L-glutamine + ATP + H2O = L-glutaminyl-tRNA(Gln) + L-glutamate + ADP + phosphate + H(+). It carries out the reaction L-aspartyl-tRNA(Asn) + L-glutamine + ATP + H2O = L-asparaginyl-tRNA(Asn) + L-glutamate + ADP + phosphate + 2 H(+). In terms of biological role, allows the formation of correctly charged Asn-tRNA(Asn) or Gln-tRNA(Gln) through the transamidation of misacylated Asp-tRNA(Asn) or Glu-tRNA(Gln) in organisms which lack either or both of asparaginyl-tRNA or glutaminyl-tRNA synthetases. The reaction takes place in the presence of glutamine and ATP through an activated phospho-Asp-tRNA(Asn) or phospho-Glu-tRNA(Gln). This chain is Aspartyl/glutamyl-tRNA(Asn/Gln) amidotransferase subunit C, found in Beutenbergia cavernae (strain ATCC BAA-8 / DSM 12333 / CCUG 43141 / JCM 11478 / NBRC 16432 / NCIMB 13614 / HKI 0122).